Reading from the N-terminus, the 256-residue chain is Homeobox protein TGIF2LX (256 aa).

Positions 1-45 (MEAAADSPAETRSRVEKDSRRVEKDSRRPKKDSPAKTQSPAQDTS) are disordered. Residues 9–34 (AETRSRVEKDSRRVEKDSRRPKKDSP) are compositionally biased toward basic and acidic residues. A compositionally biased stretch (polar residues) spans 35–45 (AKTQSPAQDTS). The homeobox; TALE-type DNA-binding region spans 62–125 (EHKKKRKGYL…INARRRILPD (64 aa)). Residues 136-224 (VGHKTGKDAN…SSSPEPVSTE (89 aa)) are disordered. Polar residues predominate over residues 166–179 (DNVQSLPLRSSPKG). The span at 209–224 (VSNITSSSSPEPVSTE) shows a compositional bias: low complexity.

It belongs to the TALE/TGIF homeobox family.

It localises to the nucleus. Functionally, may have a transcription role in testis. This is Homeobox protein TGIF2LX (TGIF2LX) from Papio hamadryas (Hamadryas baboon).